Consider the following 927-residue polypeptide: Protein LONGIFOLIA 1 (927 aa).

Disordered stretches follow at residues 41 to 198, 210 to 257, 460 to 588, and 605 to 626; these read TGDE…EGRR, YDER…GHRR, AQKV…SDSN, and YERN…DLGM. Positions 86 to 114 are enriched in low complexity; it reads SSESSSRLSFSSSPCSSSFSSADISTTAS. Over residues 115 to 125 the composition is skewed to polar residues; sequence QFEQPGLSNGE. A compositionally biased stretch (basic and acidic residues) spans 146 to 165; the sequence is DIRELVRSSIHKETRTRDEE. A compositionally biased stretch (polar residues) spans 182-193; that stretch reads KESSPSRNSNEW. The segment covering 210–226 has biased composition (basic and acidic residues); that stretch reads YDERETRKTGAKLKETP. The segment covering 232–245 has biased composition (low complexity); it reads SRSNSFRSARSSCS. 2 stretches are compositionally biased toward polar residues: residues 483-500 and 538-553; these read QTES…QSKS and NKNQ…TESA. 2 stretches are compositionally biased toward basic and acidic residues: residues 569-584 and 605-616; these read SEDR…RSLR and YERNSDITEQHT.

As to quaternary structure, interacts (via C-terminus) with TON1A and TON1B. In terms of tissue distribution, expressed in roots, petioles, leaf blades and floral organs.

It is found in the nucleus. In terms of biological role, in association with LNG2, regulates leaf morphology by promoting longitudinal polar cell elongation independently of ROT3. In Arabidopsis thaliana (Mouse-ear cress), this protein is Protein LONGIFOLIA 1 (LNG1).